Here is a 540-residue protein sequence, read N- to C-terminus: Glucose-6-phosphate isomerase (540 aa).

E346 acts as the Proton donor in catalysis. Residues H377 and K505 contribute to the active site.

Belongs to the GPI family.

The protein resides in the cytoplasm. The enzyme catalyses alpha-D-glucose 6-phosphate = beta-D-fructose 6-phosphate. It functions in the pathway carbohydrate biosynthesis; gluconeogenesis. It participates in carbohydrate degradation; glycolysis; D-glyceraldehyde 3-phosphate and glycerone phosphate from D-glucose: step 2/4. Its function is as follows. Catalyzes the reversible isomerization of glucose-6-phosphate to fructose-6-phosphate. In Francisella philomiragia subsp. philomiragia (strain ATCC 25017 / CCUG 19701 / FSC 153 / O#319-036), this protein is Glucose-6-phosphate isomerase.